The primary structure comprises 209 residues: Uracil phosphoribosyltransferase (209 aa).

5-phospho-alpha-D-ribose 1-diphosphate contacts are provided by residues Arg-79, Arg-104, and 131-139 (DPMLATGGS). Residues Ile-194 and 199 to 201 (GDA) contribute to the uracil site. Asp-200 is a 5-phospho-alpha-D-ribose 1-diphosphate binding site.

The protein belongs to the UPRTase family. The cofactor is Mg(2+).

The catalysed reaction is UMP + diphosphate = 5-phospho-alpha-D-ribose 1-diphosphate + uracil. It participates in pyrimidine metabolism; UMP biosynthesis via salvage pathway; UMP from uracil: step 1/1. With respect to regulation, allosterically activated by GTP. Catalyzes the conversion of uracil and 5-phospho-alpha-D-ribose 1-diphosphate (PRPP) to UMP and diphosphate. This is Uracil phosphoribosyltransferase from Bacillus pumilus (strain SAFR-032).